The following is a 57-amino-acid chain: Small ribosomal subunit protein bS21 (57 aa).

The protein belongs to the bacterial ribosomal protein bS21 family.

The protein is Small ribosomal subunit protein bS21 of Lysinibacillus sphaericus (strain C3-41).